The chain runs to 201 residues: Cell division protein SepF (201 aa).

Residues 27-38 (VQERTSVQRDSR) show a composition bias toward basic and acidic residues. Residues 27–99 (VQERTSVQRD…PRVQNKDSVR (73 aa)) form a disordered region. Polar residues predominate over residues 43-54 (QEASQRSHMTNS). Residues 72-81 (NRQERQRVQR) show a composition bias toward basic and acidic residues. Residues 83–92 (NAYQQATPRV) are compositionally biased toward polar residues.

Belongs to the SepF family. In terms of assembly, homodimer. Interacts with FtsZ.

Its subcellular location is the cytoplasm. Cell division protein that is part of the divisome complex and is recruited early to the Z-ring. Probably stimulates Z-ring formation, perhaps through the cross-linking of FtsZ protofilaments. Its function overlaps with FtsA. This chain is Cell division protein SepF, found in Streptococcus agalactiae serotype Ia (strain ATCC 27591 / A909 / CDC SS700).